The primary structure comprises 685 residues: Methionine--tRNA ligase (685 aa).

The 'HIGH' region motif lies at 12 to 22 (PYANGSIHLGH). Positions 143, 146, 156, and 159 each coordinate Zn(2+). The short motif at 339 to 343 (KMSKS) is the 'KMSKS' region element. ATP is bound at residue Lys342. Residues 582–685 (DFMKIDMRVA…AGAQPGDKVG (104 aa)) enclose the tRNA-binding domain.

This sequence belongs to the class-I aminoacyl-tRNA synthetase family. MetG type 1 subfamily. Homodimer. It depends on Zn(2+) as a cofactor.

The protein resides in the cytoplasm. It catalyses the reaction tRNA(Met) + L-methionine + ATP = L-methionyl-tRNA(Met) + AMP + diphosphate. In terms of biological role, is required not only for elongation of protein synthesis but also for the initiation of all mRNA translation through initiator tRNA(fMet) aminoacylation. This is Methionine--tRNA ligase from Neisseria meningitidis serogroup A / serotype 4A (strain DSM 15465 / Z2491).